The primary structure comprises 378 residues: WUSCHEL-related homeobox 9 (378 aa).

2 disordered regions span residues 1–60 (MASS…NPKP) and 123–173 (KHSL…GSQM). Residues 32 to 42 (SASHRSSPFSS) show a composition bias toward low complexity. The segment covering 45-54 (EVERSPEPKP) has biased composition (basic and acidic residues). The homeobox; WUS-type DNA-binding region spans 51–115 (EPKPRWNPKP…NRKSRSKHKL (65 aa)). Composition is skewed to low complexity over residues 137–152 (PSAS…SSKS) and 161–171 (KNNTNLSLGGS).

The protein belongs to the WUS homeobox family. In terms of tissue distribution, expressed in the basal cell and later at the boundary between suspensor and proembryo. Expressed at low levels in proliferating tissues post embryonically. Detected in vegetative shoot apical meristem, leaf primordia, floral meristems, emerging floral organs, epidermal layer of the placenta and in the upper portion of the root meristematic zone.

It localises to the nucleus. It is found in the cytoplasm. In terms of biological role, homeodomain transcription factor required for meristem growth and early development. Promotes cell proliferation and prevents premature differentiation in meristematic tissues during postembryonic development. Essential for maintaining tissue growth during embryogenesis. May act by repressing TSS to promote meristematic proliferation. Involved in the transcriptional activation of a subset of cytokinin response factors. May act as a negative regulator of cytokinin signaling in the dark. This Arabidopsis thaliana (Mouse-ear cress) protein is WUSCHEL-related homeobox 9.